The chain runs to 243 residues: Ubiquinone/menaquinone biosynthesis C-methyltransferase UbiE (243 aa).

S-adenosyl-L-methionine is bound by residues Thr69, Asp90, and 116–117; that span reads DA.

Belongs to the class I-like SAM-binding methyltransferase superfamily. MenG/UbiE family.

It carries out the reaction a 2-demethylmenaquinol + S-adenosyl-L-methionine = a menaquinol + S-adenosyl-L-homocysteine + H(+). The enzyme catalyses a 2-methoxy-6-(all-trans-polyprenyl)benzene-1,4-diol + S-adenosyl-L-methionine = a 5-methoxy-2-methyl-3-(all-trans-polyprenyl)benzene-1,4-diol + S-adenosyl-L-homocysteine + H(+). It participates in quinol/quinone metabolism; menaquinone biosynthesis; menaquinol from 1,4-dihydroxy-2-naphthoate: step 2/2. The protein operates within cofactor biosynthesis; ubiquinone biosynthesis. Its function is as follows. Methyltransferase required for the conversion of demethylmenaquinol (DMKH2) to menaquinol (MKH2) and the conversion of 2-polyprenyl-6-methoxy-1,4-benzoquinol (DDMQH2) to 2-polyprenyl-3-methyl-6-methoxy-1,4-benzoquinol (DMQH2). In Cupriavidus pinatubonensis (strain JMP 134 / LMG 1197) (Cupriavidus necator (strain JMP 134)), this protein is Ubiquinone/menaquinone biosynthesis C-methyltransferase UbiE.